A 354-amino-acid polypeptide reads, in one-letter code: Guanine nucleotide-binding protein G(t) subunit alpha-3 (354 aa).

The disordered stretch occupies residues 1–27 (MGSGISSESKESAKRSKELEKKLQEDA). Glycine 2 is lipidated: N-myristoyl glycine. The segment covering 8-27 (ESKESAKRSKELEKKLQEDA) has biased composition (basic and acidic residues). The region spanning 32 to 354 (RTVKLLLLGA…KENLKDCGLF (323 aa)) is the G-alpha domain. The segment at 35–48 (KLLLLGAGESGKST) is G1 motif. GTP contacts are provided by residues 40–47 (GAGESGKS), 175–181 (LHSRVKT), 200–204 (DVGGQ), 269–272 (NKKD), and alanine 326. Serine 47 and threonine 181 together coordinate Mg(2+). Residues 173-181 (DVLHSRVKT) form a G2 motif region. The interval 196–205 (FRMFDVGGQR) is G3 motif. Positions 265-272 (VLFLNKKD) are G4 motif. The G5 motif stretch occupies residues 324-329 (TCATDT).

This sequence belongs to the G-alpha family. G(i/o/t/z) subfamily. G proteins are composed of 3 units; alpha, beta and gamma, respectively GNAT3, GNB1 and GNG13 for Gustducin heterotrimer for bitter taste transduction. The alpha chain contains the guanine nucleotide binding site. Component of the TAS2R14-GNAT3 complex, consisting of TAS2R14, GNAT3, GNB1 and GNG2; within the complex interacts with TAS2R14; this complex plays a role in the perception of bitterness. Gustducin heterotrimer may also be composed of GNAT3, GNB3 and GNG13. In terms of processing, potential N-myristoylation may anchor alpha-subunit to the inner surface of plasma membrane. In terms of tissue distribution, expressed in taste buds (sensory organs of clustered epithelial cells) of the circumvallate, foliate and fungiform papillae of the tongue, as well as in nasoincisor, palatal and epiglottal taste buds at protein level. Expressed in enteroendocrine of the gut, in the lumenal pole of a subset of brush cells lining the stomach and the intestine at protein level. Detected in solitary cells throughout the respiratory track. Expressed also in spermatozoa.

The protein resides in the cytoplasm. Guanine nucleotide-binding protein (G protein) alpha subunit playing a prominent role in bitter and sweet taste transduction as well as in umami (monosodium glutamate, monopotassium glutamate, and inosine monophosphate) taste transduction. Transduction by this alpha subunit involves coupling of specific cell-surface receptors with a cGMP-phosphodiesterase; Activation of phosphodiesterase lowers intracellular levels of cAMP and cGMP which may open a cyclic nucleotide-suppressible cation channel leading to influx of calcium, ultimately leading to release of neurotransmitter. Indeed, denatonium and strychnine induce transient reduction in cAMP and cGMP in taste tissue, whereas this decrease is inhibited by GNAT3 antibody. Gustducin heterotrimer transduces response to bitter and sweet compounds via regulation of phosphodiesterase for alpha subunit, as well as via activation of phospholipase C for beta and gamma subunits, with ultimate increase inositol trisphosphate and increase of intracellular Calcium. GNAT3 can functionally couple to taste receptors to transmit intracellular signal: receptor heterodimer TAS1R2/TAS1R3 senses sweetness and TAS1R1/TAS1R3 transduces umami taste, whereas the T2R family GPCRs act as bitter sensors. Also functions as lumenal sugar sensors in the gut to control the expression of the Na+-glucose transporter SGLT1 in response to dietaty sugar, as well as the secretion of Glucagon-like peptide-1, GLP-1 and glucose-dependent insulinotropic polypeptide, GIP. Thus, may modulate the gut capacity to absorb sugars, with implications for the prevention and treatment of malabsorption syndromes and diet-related disorders including diabetes and obesity. The chain is Guanine nucleotide-binding protein G(t) subunit alpha-3 (Gnat3) from Rattus norvegicus (Rat).